The primary structure comprises 61 residues: MAKTSLKVKATRHPKYSARAYTRCQICGRPQAVLRKYKICRICFRKLAHEGKIPGMKKASW.

Cys24, Cys27, Cys40, and Cys43 together coordinate Zn(2+).

This sequence belongs to the universal ribosomal protein uS14 family. Zinc-binding uS14 subfamily. Part of the 30S ribosomal subunit. Contacts proteins S3 and S10. The cofactor is Zn(2+).

Its function is as follows. Binds 16S rRNA, required for the assembly of 30S particles and may also be responsible for determining the conformation of the 16S rRNA at the A site. The chain is Small ribosomal subunit protein uS14 from Mycoplasma mobile (strain ATCC 43663 / 163K / NCTC 11711) (Mesomycoplasma mobile).